Consider the following 413-residue polypeptide: MTRMLDLGLFLAGLLTVKGLLQDRDAPDMYDSPVRVQEWRGKKDARQLARHNMEFGFKLLQRLASNSPQGNIFLSPLSISTAFSMLSLGAQNSTLEEIREGFNFKEMSNWDVHAAFHYLLHKLNQETEDTKMNLGNALFMDQKLRPQQRFLNLAKNVYDADMVLTNFQDLENTQKDINRYISQKTHSRIKNMVKSIDPGTVMILTNYIYFRGRWQYEFDPKQTKEEEFFIEKGKTVKVPMMFQRGLYDMAYDSQLSCTILEIPYRGNITATFVLPDNGKLKLLEQGLQADIFAKWKSLLSKRVVDVWVPKLRISSTYNMKKVLSRLGISKIFEENGDLTRISSHRSLKVGEAVHKAELKMDEKGMEGAAGSGAQTLPMETPRHMKLDRPFLMMIYENFMPSMVFLARIYDPSG.

The N-terminal stretch at 1–20 (MTRMLDLGLFLAGLLTVKGL) is a signal peptide. Asn-92 and Asn-267 each carry an N-linked (GlcNAc...) asparagine glycan. Residues 364–382 (GMEGAAGSGAQTLPMETPR) form a reactive center loop region.

The protein belongs to the serpin family. Forms a stable complex with KLK7. Post-translationally, glycosylation slightly decreases affinity for heparin, but otherwise has no significant effect on KLK7 inhibitory activity or thermal stability of the protein. Expressed in visceral adipose tissues.

Its subcellular location is the secreted. With respect to regulation, inhibition of KLK7 is enhanced by heparin. Functionally, adipokine that modulates insulin action by specifically inhibiting its target protease KLK7 in white adipose tissues. This Mus musculus (Mouse) protein is Serpin A12 (Serpina12).